A 628-amino-acid polypeptide reads, in one-letter code: Dual specificity testis-specific protein kinase 1 (628 aa).

The segment at 1-35 is disordered; that stretch reads MAGERPPLRGPGPGETPVEGPGGAGGGPGRGRPSS. A compositionally biased stretch (gly residues) spans 20 to 30; that stretch reads GPGGAGGGPGR. In terms of domain architecture, Protein kinase spans 52-310; sequence FDCAEKIGAG…EITQHLEQIL (259 aa). ATP contacts are provided by residues 58–66 and lysine 81; that span reads IGAGFFSEV. Residue aspartate 170 is the Proton acceptor of the active site. Serine 215 bears the Phosphoserine; by autocatalysis mark. Disordered stretches follow at residues 330 to 376, 424 to 490, and 538 to 568; these read TYNQ…DNLT, PESL…QLPL, and RAQH…EEGL. Arginine 338 carries the omega-N-methylarginine modification. A compositionally biased stretch (basic and acidic residues) spans 348–357; it reads SDPRLSRSRS. A required for interaction with YWHAB region spans residues 421–526; the sequence is VASPESLVQP…NNNPPAVVVN (106 aa). The residue at position 439 (serine 439) is a Phosphoserine. Residues 478–487 are compositionally biased toward pro residues; sequence EPEPPGPAPQ. Residues 529-626 are required for interaction with PARVA; that stretch reads QGWAREPWNR…PTPSLQLPGA (98 aa). Positions 529 to 628 are required for interaction with SPRED1 and SPRY2. Required for TESK1-mediated dephosphorylation of SPRY2 and SPRY2 inhibition of ERK phosphorylation; the sequence is QGWAREPWNR…PSLQLPGARS (100 aa).

Belongs to the protein kinase superfamily. TKL Ser/Thr protein kinase family. Interacts (via both C- and N-termini) with SPRY4 (via C-terminus); the interaction inhibits TESK1 kinase activity. Interacts with TAOK1; the interaction inhibits TAOK1 kinase activity. Interacts (via C-terminus) with SPRED1 (via C-terminus); the interaction inhibits TESK1 kinase activity. Interacts (via C-terminus) with PARVA/PARVIN (via C-terminus); the interaction inhibits TESK1 kinase activity. Interacts with YWHAB/14-3-3 beta; the interaction is dependent on the phosphorylation of TESK1 Ser-439 and inhibits TESK1 kinase activity. Interacts with SPRY1, SPRY3 and SPRED2. Interacts (via C-terminus) with SPRY2 (via C-terminus); the interaction disrupts SPRY2 interaction with PPP2CA/PP2A-C, possibly by vesicular sequestration of SPRY2. Therefore dephosphorylation of SPRY2 by the serine/threonine-protein phosphatase 2A (PP2A) holoenzyme is lost, inhibiting its interaction with GRB2. Mg(2+) serves as cofactor. The cofactor is Mn(2+). In terms of processing, autophosphorylated on serine and tyrosine residues. As to expression, weakly expressed in sciatic nerves (at protein level). Highly expressed in testicular germ cells. Expressed at low levels in brain, lung, heart, liver and kidney.

It localises to the cytoplasm. The protein resides in the perinuclear region. The protein localises to the cytoskeleton. Its subcellular location is the microtubule organizing center. It is found in the centrosome. It localises to the cell projection. The protein resides in the lamellipodium. It carries out the reaction L-seryl-[protein] + ATP = O-phospho-L-seryl-[protein] + ADP + H(+). The catalysed reaction is L-threonyl-[protein] + ATP = O-phospho-L-threonyl-[protein] + ADP + H(+). The enzyme catalyses L-tyrosyl-[protein] + ATP = O-phospho-L-tyrosyl-[protein] + ADP + H(+). Its activity is regulated as follows. Activated by autophosphorylation on Ser-215. Kinase activity is inhibited by SPRED1. Functionally, dual specificity protein kinase activity catalyzing autophosphorylation and phosphorylation of exogenous substrates on both serine/threonine and tyrosine residues. Regulates the cellular cytoskeleton by enhancing actin stress fiber formation via phosphorylation of cofilin and by preventing microtubule breakdown via inhibition of TAOK1/MARKK kinase activity. Inhibits podocyte motility via regulation of actin cytoskeletal dynamics and phosphorylation of CFL1. Positively regulates integrin-mediated cell spreading, via phosphorylation of cofilin. Suppresses ciliogenesis via multiple pathways; phosphorylation of CFL1, suppression of ciliary vesicle directional trafficking to the ciliary base, and by facilitating YAP1 nuclear localization where it acts as a transcriptional corepressor of the TEAD4 target genes AURKA and PLK1. Probably plays a central role at and after the meiotic phase of spermatogenesis. In Rattus norvegicus (Rat), this protein is Dual specificity testis-specific protein kinase 1 (Tesk1).